The primary structure comprises 371 residues: Glutamate 5-kinase (371 aa).

Lys14 provides a ligand contact to ATP. Substrate contacts are provided by Ser54, Asp141, and Asn153. Residue 173–174 (TD) participates in ATP binding. The PUA domain maps to 280-357 (AGSLIVDAGA…SDIEQLLGYI (78 aa)).

It belongs to the glutamate 5-kinase family.

It localises to the cytoplasm. The enzyme catalyses L-glutamate + ATP = L-glutamyl 5-phosphate + ADP. The protein operates within amino-acid biosynthesis; L-proline biosynthesis; L-glutamate 5-semialdehyde from L-glutamate: step 1/2. Its function is as follows. Catalyzes the transfer of a phosphate group to glutamate to form L-glutamate 5-phosphate. The protein is Glutamate 5-kinase of Azoarcus sp. (strain BH72).